The chain runs to 806 residues: 85/88 kDa calcium-independent phospholipase A2 (806 aa).

9 ANK repeats span residues Trp-120 to Ala-147, Glu-151 to Val-181, Lys-185 to Gln-215, Gln-219 to Ile-248, Pro-251 to Ser-281, Tyr-286 to Ser-312, Ala-316 to Ala-345, His-349 to Thr-378, and Phe-382 to Leu-403. A run of 2 helical transmembrane segments spans residues Leu-480–Ile-500 and Leu-511–Ser-531. The PNPLA domain maps to Leu-481 to Met-665. Residues Gly-485–Gly-490 carry the GXGXXG motif. Residues Gly-517–Gly-521 carry the GXSXG motif. Ser-519 functions as the Nucleophile in the catalytic mechanism. The Proton acceptor role is filled by Asp-652. The DGA/G signature appears at Asp-652–Gly-654. A calmodulin-binding (1-9-14 motif) region spans residues Arg-677–Lys-686. The tract at residues Ala-748 to Arg-759 is calmodulin-binding (IQ motif).

In terms of assembly, homodimer formed by catalytic domains tightly interacting through a large hydrophobic interface. The contact area involves 3 alpha helices, several loops and a part of the beta sheet from each monomer. Both active sites of the dimer are in close proximity adopting an open conformation that provide sufficient space for phospholipid access and favoring cooperativity in deacylation-reacylation reactions. Each monomer has 9 ankyrin repeats stacked side-by-side in an elongated structure oriented outwards from the catalytic core. As to expression, four different transcripts were found to be expressed in a distinct tissue distribution.

It localises to the cytoplasm. It is found in the cell membrane. The protein localises to the mitochondrion. Its subcellular location is the cell projection. The protein resides in the pseudopodium. It carries out the reaction a 1,2-diacyl-sn-glycero-3-phosphocholine + H2O = a 1-acyl-sn-glycero-3-phosphocholine + a fatty acid + H(+). The catalysed reaction is a 1-O-alkyl-2-acyl-sn-glycero-3-phosphocholine + H2O = a 1-O-alkyl-sn-glycero-3-phosphocholine + a fatty acid + H(+). The enzyme catalyses 1,2-dihexadecanoyl-sn-glycero-3-phosphocholine + H2O = 1-hexadecanoyl-sn-glycero-3-phosphocholine + hexadecanoate + H(+). It catalyses the reaction 1-hexadecanoyl-2-(9Z-octadecenoyl)-sn-glycero-3-phosphocholine + H2O = 1-hexadecanoyl-sn-glycero-3-phosphocholine + (9Z)-octadecenoate + H(+). It carries out the reaction 1-hexadecanoyl-2-(9Z,12Z-octadecadienoyl)-sn-glycero-3-phosphocholine + H2O = (9Z,12Z)-octadecadienoate + 1-hexadecanoyl-sn-glycero-3-phosphocholine + H(+). The catalysed reaction is 1-hexadecanoyl-2-(5Z,8Z,11Z,14Z-eicosatetraenoyl)-sn-glycero-3-phosphocholine + H2O = 1-hexadecanoyl-sn-glycero-3-phosphocholine + (5Z,8Z,11Z,14Z)-eicosatetraenoate + H(+). The enzyme catalyses 1-octadecanoyl-2-(5Z,8Z,11Z,14Z-eicosatetraenoyl)-sn-glycero-3-phosphocholine + H2O = 1-octadecanoyl-sn-glycero-3-phosphocholine + (5Z,8Z,11Z,14Z)-eicosatetraenoate + H(+). It catalyses the reaction 1-hexadecanoyl-2-(5Z,8Z,11Z,14Z-eicosatetraenoyl)-sn-glycero-3-phosphoethanolamine + H2O = 1-hexadecanoyl-sn-glycero-3-phosphoethanolamine + (5Z,8Z,11Z,14Z)-eicosatetraenoate + H(+). It carries out the reaction 1,2-dihexadecanoyl-sn-glycero-3-phosphate + H2O = 1-hexadecanoyl-sn-glycero-3-phosphate + hexadecanoate + H(+). The catalysed reaction is a 1-acyl-sn-glycero-3-phosphocholine + H2O = sn-glycerol 3-phosphocholine + a fatty acid + H(+). The enzyme catalyses 1-hexadecanoyl-sn-glycero-3-phosphocholine + H2O = sn-glycerol 3-phosphocholine + hexadecanoate + H(+). It catalyses the reaction 1-(5Z,8Z,11Z,14Z-eicosatetraenoyl)-sn-glycero-3-phosphocholine + H2O = sn-glycerol 3-phosphocholine + (5Z,8Z,11Z,14Z)-eicosatetraenoate + H(+). It carries out the reaction 2-(5Z,8Z,11Z,14Z)-eicosatetraenoyl-sn-glycero-3-phosphocholine + H2O = sn-glycerol 3-phosphocholine + (5Z,8Z,11Z,14Z)-eicosatetraenoate + H(+). The catalysed reaction is 1-O-hexadecyl-2-(5Z,8Z,11Z,14Z)-eicosatetraenoyl-sn-glycero-3-phosphocholine + H2O = 1-O-hexadecyl-sn-glycero-3-phosphocholine + (5Z,8Z,11Z,14Z)-eicosatetraenoate + H(+). The enzyme catalyses 1-O-hexadecyl-2-acetyl-sn-glycero-3-phosphocholine + H2O = 1-O-hexadecyl-sn-glycero-3-phosphocholine + acetate + H(+). It catalyses the reaction hexadecanoyl-CoA + H2O = hexadecanoate + CoA + H(+). It carries out the reaction 1',3'-bis[1,2-di-(9Z-octadecenoyl)-sn-glycero-3-phospho]-glycerol + H2O = 1'-[1,2-di-(9Z-octadecenoyl)-sn-glycero-3-phospho]-3'-[1-(9Z-octadecenoyl)-sn-glycero-3-phospho]-glycerol + (9Z)-octadecenoate + H(+). The catalysed reaction is 1'-[1,2-di-(9Z-octadecenoyl)-sn-glycero-3-phospho]-3'-[1-(9Z-octadecenoyl)-sn-glycero-3-phospho]-glycerol + H2O = 1',3'-bis-[1-(9Z-octadecenoyl)-sn-glycero-3-phospho]-glycerol + (9Z)-octadecenoate + H(+). The enzyme catalyses 1',3'-bis-[1,2-di-(9Z,12Z-octadecadienoyl)-sn-glycero-3-phospho]-glycerol + H2O = 1'-[1,2-di-(9Z,12Z-octadecadienoyl)-sn-glycero-3-phospho]-3'-[1-(9Z,12Z-octadecadienoyl)-sn-glycero-3-phospho]-glycerol + (9Z,12Z)-octadecadienoate + H(+). It catalyses the reaction 1-octadecanoyl-2-(15-hydroxy-(5Z,8Z,11Z,13E)-eicosatetraenoyl)-sn-glycero-3-phosphoethanolamine + H2O = 1-octadecanoyl-sn-glycero-3-phosphoethanolamine + 15-hydroxy-(5Z,8Z,11Z,13E)-eicosatetraenoate + H(+). Its activity is regulated as follows. Activated by ATP. Inhibited by calcium-activated calmodulin. Inhibited by bromoenol lactone (BEL). Its function is as follows. Calcium-independent phospholipase involved in phospholipid remodeling with implications in cellular membrane homeostasis, mitochondrial integrity and signal transduction. Hydrolyzes the ester bond of the fatty acyl group attached at sn-1 or sn-2 position of phospholipids (phospholipase A1 and A2 activity respectively), producing lysophospholipids that are used in deacylation-reacylation cycles. Hydrolyzes both saturated and unsaturated long fatty acyl chains in various glycerophospholipid classes such as phosphatidylcholines, phosphatidylethanolamines and phosphatidates, with a preference for hydrolysis at sn-2 position. Can further hydrolyze lysophospholipids carrying saturated fatty acyl chains (lysophospholipase activity). Upon oxidative stress, contributes to remodeling of mitochondrial phospholipids in pancreatic beta cells, in a repair mechanism to reduce oxidized lipid content. Preferentially hydrolyzes oxidized polyunsaturated fatty acyl chains from cardiolipins, yielding monolysocardiolipins that can be reacylated with unoxidized fatty acyls to regenerate native cardiolipin species. Hydrolyzes oxidized glycerophosphoethanolamines present in pancreatic islets, releasing oxidized polyunsaturated fatty acids such as hydroxyeicosatetraenoates (HETEs). Has thioesterase activity toward fatty-acyl CoA releasing CoA-SH known to facilitate fatty acid transport and beta-oxidation in mitochondria particularly in skeletal muscle. Plays a role in regulation of membrane dynamics and homeostasis. Selectively hydrolyzes sn-2 arachidonoyl group in plasmalogen phospholipids, structural components of lipid rafts and myelin. Regulates F-actin polymerization at the pseudopods, which is required for both speed and directionality of MCP1/CCL2-induced monocyte chemotaxis. Targets membrane phospholipids to produce potent lipid signaling messengers. Generates lysophosphatidate (LPA, 1-acyl-glycerol-3-phosphate), which acts via G-protein receptors in various cell types. Has phospholipase A2 activity toward platelet-activating factor (PAF, 1-O-alkyl-2-acetyl-sn-glycero-3-phosphocholine), likely playing a role in inactivation of this potent pro-inflammatory signaling lipid. In response to glucose, amplifies calcium influx in pancreatic beta cells to promote INS secretion. Lacks the catalytic domain and may act as a negative regulator of the catalytically active isoforms. The polypeptide is 85/88 kDa calcium-independent phospholipase A2 (PLA2G6) (Homo sapiens (Human)).